Reading from the N-terminus, the 245-residue chain is Geranylgeranylglyceryl phosphate synthase (245 aa).

Mg(2+) is bound by residues D22 and S51. Residues 169 to 175 (YLEAGSG), 200 to 201 (GG), and 222 to 223 (GT) each bind sn-glycerol 1-phosphate.

Belongs to the GGGP/HepGP synthase family. Group II subfamily. In terms of assembly, homotetramer. Homohexamer. Mg(2+) serves as cofactor.

The protein localises to the cytoplasm. It catalyses the reaction sn-glycerol 1-phosphate + (2E,6E,10E)-geranylgeranyl diphosphate = sn-3-O-(geranylgeranyl)glycerol 1-phosphate + diphosphate. Its pathway is membrane lipid metabolism; glycerophospholipid metabolism. Functionally, prenyltransferase that catalyzes the transfer of the geranylgeranyl moiety of geranylgeranyl diphosphate (GGPP) to the C3 hydroxyl of sn-glycerol-1-phosphate (G1P). This reaction is the first ether-bond-formation step in the biosynthesis of archaeal membrane lipids. The protein is Geranylgeranylglyceryl phosphate synthase of Methanothermobacter thermautotrophicus (strain ATCC 29096 / DSM 1053 / JCM 10044 / NBRC 100330 / Delta H) (Methanobacterium thermoautotrophicum).